A 397-amino-acid chain; its full sequence is Ribosomal RNA processing protein 1 homolog (397 aa).

Positions Glu334–Asn343 are enriched in basic and acidic residues. The segment at Glu334–Pro366 is disordered.

It belongs to the RRP1 family.

It localises to the nucleus. Its function is as follows. May be involved in the generation of 28S rRNA. The polypeptide is Ribosomal RNA processing protein 1 homolog (Caenorhabditis elegans).